A 165-amino-acid polypeptide reads, in one-letter code: Putative protein FAM86C2P (165 aa).

The protein belongs to the class I-like SAM-binding methyltransferase superfamily. EEF2KMT family.

In Homo sapiens (Human), this protein is Putative protein FAM86C2P (FAM86C2P).